The primary structure comprises 267 residues: 3-methyl-2-oxobutanoate hydroxymethyltransferase (267 aa).

Mg(2+)-binding residues include Asp41 and Asp80. 3-methyl-2-oxobutanoate contacts are provided by residues Asp41–Ser42, Asp80, and Lys109. Glu111 contacts Mg(2+). Residue Glu178 is the Proton acceptor of the active site.

It belongs to the PanB family. In terms of assembly, homodecamer; pentamer of dimers. Requires Mg(2+) as cofactor.

The protein localises to the cytoplasm. The enzyme catalyses 3-methyl-2-oxobutanoate + (6R)-5,10-methylene-5,6,7,8-tetrahydrofolate + H2O = 2-dehydropantoate + (6S)-5,6,7,8-tetrahydrofolate. It participates in cofactor biosynthesis; (R)-pantothenate biosynthesis; (R)-pantoate from 3-methyl-2-oxobutanoate: step 1/2. Its function is as follows. Catalyzes the reversible reaction in which hydroxymethyl group from 5,10-methylenetetrahydrofolate is transferred onto alpha-ketoisovalerate to form ketopantoate. The sequence is that of 3-methyl-2-oxobutanoate hydroxymethyltransferase from Kosmotoga olearia (strain ATCC BAA-1733 / DSM 21960 / TBF 19.5.1).